We begin with the raw amino-acid sequence, 225 residues long: Biosynthetic peptidoglycan transglycosylase (225 aa).

The chain crosses the membrane as a helical span at residues 8-28 (VLLIFIGAILLIQLWIFSSLV).

The protein belongs to the glycosyltransferase 51 family.

It localises to the cell inner membrane. It carries out the reaction [GlcNAc-(1-&gt;4)-Mur2Ac(oyl-L-Ala-gamma-D-Glu-L-Lys-D-Ala-D-Ala)](n)-di-trans,octa-cis-undecaprenyl diphosphate + beta-D-GlcNAc-(1-&gt;4)-Mur2Ac(oyl-L-Ala-gamma-D-Glu-L-Lys-D-Ala-D-Ala)-di-trans,octa-cis-undecaprenyl diphosphate = [GlcNAc-(1-&gt;4)-Mur2Ac(oyl-L-Ala-gamma-D-Glu-L-Lys-D-Ala-D-Ala)](n+1)-di-trans,octa-cis-undecaprenyl diphosphate + di-trans,octa-cis-undecaprenyl diphosphate + H(+). It participates in cell wall biogenesis; peptidoglycan biosynthesis. In terms of biological role, peptidoglycan polymerase that catalyzes glycan chain elongation from lipid-linked precursors. The sequence is that of Biosynthetic peptidoglycan transglycosylase from Acinetobacter baumannii (strain ACICU).